Consider the following 395-residue polypeptide: Elongation factor Tu (395 aa).

The tr-type G domain occupies 10 to 204; that stretch reads KPHCNIGTIG…TVDSYIPDPQ (195 aa). The G1 stretch occupies residues 19–26; that stretch reads GHVDHGKT. GTP is bound at residue 19–26; the sequence is GHVDHGKT. Threonine 26 provides a ligand contact to Mg(2+). Residues 61 to 65 are G2; it reads GITIS. The tract at residues 82–85 is G3; that stretch reads DCPG. GTP is bound by residues 82-86 and 137-140; these read DCPGH and NKCD. Residues 137 to 140 are G4; sequence NKCD. The segment at 173 to 175 is G5; the sequence is SAL.

This sequence belongs to the TRAFAC class translation factor GTPase superfamily. Classic translation factor GTPase family. EF-Tu/EF-1A subfamily. As to quaternary structure, monomer.

The protein resides in the cytoplasm. It carries out the reaction GTP + H2O = GDP + phosphate + H(+). Its function is as follows. GTP hydrolase that promotes the GTP-dependent binding of aminoacyl-tRNA to the A-site of ribosomes during protein biosynthesis. The chain is Elongation factor Tu from Agathobacter rectalis (strain ATCC 33656 / DSM 3377 / JCM 17463 / KCTC 5835 / VPI 0990) (Eubacterium rectale).